A 403-amino-acid chain; its full sequence is F-box/LRR-repeat protein At1g06630 (403 aa).

Positions 11-59 (RDAINWLPDEILGKILSLLATKQAVSTSVLSKKWRTLFKLVDTLEFDDS) constitute an F-box domain. 2 LRR repeats span residues 239–262 (LPNL…NLES) and 288–312 (IRNV…KYGL).

This is F-box/LRR-repeat protein At1g06630 from Arabidopsis thaliana (Mouse-ear cress).